A 372-amino-acid chain; its full sequence is uncharacterized protein (372 aa).

A helical membrane pass occupies residues 224–244 (GSTVGVVIGVVIVIFIGFIII). A Phosphoserine modification is found at serine 329.

The protein resides in the vacuole membrane. This is an uncharacterized protein from Saccharomyces cerevisiae (strain ATCC 204508 / S288c) (Baker's yeast).